Reading from the N-terminus, the 603-residue chain is MDTNIINHYDIIIIGGGIAGLSATRHLLLKMPELSGRIAVIEPRSERRDNLDEDYKVGESTVEVSAMFFAKELELQDYLIENHPPKFSLQFHWPRELSKTDTIEDYYSTWAVKNPDIQAFQLNRCKIERDLLKMVIAQGAVYYHGRVRNVDNLDNDDMKSIDVEILSEVESGADFKLQQSIERITLTTDYIVDASGRNFTVGSRTDNILKDPKHLFGLDNASTWVRVKNTERSLFDFKSQDVTCSWTYDTNHFFGPGYWIWMIPLERGSRDYSIGVSYHRDKIQPSQLNSLDKFMSFLEKNQKLLYNLIKSGEIVDFHRWPKLAHTSKTFFSKNNWCVIGDAAAIFDPFYSTGMVMIAMEIECLTEMLKFKLSNAANDYHRRVEAFDKLIRCVTQINNHLIKDHSNHLGNASIMSWRIYFESSTYFSILLPAYIGKYHLCPIFSDHFTTDHENGLALRNQLLATLDYANENSINIGFMDNHRGGQLLGDWSPTSSWDYDHALSLAKYGHKRLNLPKCLSWSNFYLSLIICKLYYRVYGIGALWNSSFFKSLSNTTYRFSKFYFLSKLHSFNMIGTPNNDYYDKIQKDFKSYNYNQNNIVDWKY.

The FAD site is built by G16, A19, and E59. Positions 352 and 353 each coordinate chloride.

Belongs to the flavin-dependent halogenase family.

It catalyses the reaction 2,4,6-trihydroxyphenylhexan-1-one + FADH2 + chloride + O2 = (3-chloro-2,4,6-trihydroxyphenyl)hexan-1-one + FAD + 2 H2O + H(+). The enzyme catalyses (3-chloro-2,4,6-trihydroxyphenyl)hexan-1-one + FADH2 + chloride + O2 = (3,5-dichloro-2,4,6-trihydroxyphenyl)hexan-1-one + FAD + 2 H2O. In terms of biological role, flavin-dependent halogenase; part of the gene cluster that mediates the biosynthesis of DIF-1 (Differentiation Inducing Factor-1), a signal molecule involved in the differentiation of pstO (prestalk-O) cells. The three-step process begins with the formation of (2,4,6-trihydroxyphenyl)-1-hexan-1-one (THPH) by the polyketide synthase StlB. THPH is then dichlorinated by the flavin-dependent halogenase ChlA. The last step of DIF-1 biosynthesis is the O-methylation of dichloro-THPH (or des-methyl-DIF-1) by the methyltransferase DmtA to yield DIF-1. This is Flavin-dependent halogenase chlA from Dictyostelium discoideum (Social amoeba).